The following is a 277-amino-acid chain: ATP synthase subunit delta (277 aa).

The protein belongs to the ATPase delta chain family. F-type ATPases have 2 components, F(1) - the catalytic core - and F(0) - the membrane proton channel. F(1) has five subunits: alpha(3), beta(3), gamma(1), delta(1), epsilon(1). F(0) has three main subunits: a(1), b(2) and c(10-14). The alpha and beta chains form an alternating ring which encloses part of the gamma chain. F(1) is attached to F(0) by a central stalk formed by the gamma and epsilon chains, while a peripheral stalk is formed by the delta and b chains.

The protein resides in the cell membrane. Its function is as follows. F(1)F(0) ATP synthase produces ATP from ADP in the presence of a proton or sodium gradient. F-type ATPases consist of two structural domains, F(1) containing the extramembraneous catalytic core and F(0) containing the membrane proton channel, linked together by a central stalk and a peripheral stalk. During catalysis, ATP synthesis in the catalytic domain of F(1) is coupled via a rotary mechanism of the central stalk subunits to proton translocation. This protein is part of the stalk that links CF(0) to CF(1). It either transmits conformational changes from CF(0) to CF(1) or is implicated in proton conduction. In Frankia alni (strain DSM 45986 / CECT 9034 / ACN14a), this protein is ATP synthase subunit delta.